A 414-amino-acid chain; its full sequence is MANSC domain-containing protein 1 (414 aa).

The first 24 residues, 1–24 (MLFRGTSLAYSLLVISFLTPRSSA), serve as a signal peptide directing secretion. Residues 25-369 (GQNCLTKSLE…HGLSFEKWLL (345 aa)) lie on the Extracellular side of the membrane. The 85-residue stretch at 32–116 (SLEDVVIDIQ…LKPAKGLVTY (85 aa)) folds into the MANSC domain. N-linked (GlcNAc...) asparagine glycans are attached at residues Asn-128, Asn-234, and Asn-335. The segment at 311–339 (FQGGSTLTSDPRHGKSSTSESSITNKTAS) is disordered. The segment covering 326-338 (SSTSESSITNKTA) has biased composition (polar residues). The chain crosses the membrane as a helical span at residues 370–392 (IGTLLCGVLFLVIGLVLLGRMLV). Topologically, residues 393-414 (EALRRKRYSRLDYLINGIYVDI) are cytoplasmic.

It localises to the membrane. The sequence is that of MANSC domain-containing protein 1 (Mansc1) from Mus musculus (Mouse).